We begin with the raw amino-acid sequence, 112 residues long: MKKIEAIIRPFKLNEVKLALVKGGIGGMTVVKVSGFGRQKGQTERYKGSEYSIDIIDKIKIEIIVSDDKVNSITEIIIKTAKTGEIGDGKIFISDVEQVIRIRTNDLNSAAL.

Tyr-51 is subject to O-UMP-tyrosine.

This sequence belongs to the P(II) protein family. Homotrimer.

The protein resides in the plastid. It is found in the chloroplast. In terms of biological role, P-II indirectly controls the transcription of the glutamine synthetase gene (glnA). P-II prevents NR-II-catalyzed conversion of NR-I to NR-I-phosphate, the transcriptional activator of glnA. When P-II is uridylylated to P-II-UMP, these events are reversed. When the ratio of Gln to 2-ketoglutarate decreases, P-II is uridylylated to P-II-UMP, which causes the deadenylation of glutamine synthetase, so activating the enzyme. The protein is Nitrogen regulatory protein P-II (glnB) of Porphyra purpurea (Red seaweed).